A 565-amino-acid chain; its full sequence is Urease subunit beta (565 aa).

The Urease domain occupies 130-565 (GGIDTHIHFI…LALARKYFMI (436 aa)). Ni(2+) contacts are provided by His-135, His-137, and Lys-218. Lys-218 is subject to N6-carboxylysine. His-220 lines the substrate pocket. Ni(2+)-binding residues include His-247 and His-273. Residue His-321 is the Proton donor of the active site. Asp-361 is a binding site for Ni(2+).

The protein belongs to the metallo-dependent hydrolases superfamily. Urease alpha subunit family. In terms of assembly, heterohexamer of 3 UreA (alpha) and 3 UreB (beta) subunits. Ni cation serves as cofactor. In terms of processing, carboxylation allows a single lysine to coordinate two nickel ions.

The protein localises to the cytoplasm. The enzyme catalyses urea + 2 H2O + H(+) = hydrogencarbonate + 2 NH4(+). It participates in nitrogen metabolism; urea degradation; CO(2) and NH(3) from urea (urease route): step 1/1. In Campylobacter lari, this protein is Urease subunit beta.